Here is a 159-residue protein sequence, read N- to C-terminus: Neuroglobin-1 (159 aa).

One can recognise a Globin domain in the interval 3-151 (KLTEKEKELI…VVAAMSRGWA (149 aa)). Heme b contacts are provided by histidine 66 and histidine 98.

The protein belongs to the globin family. In terms of assembly, monomer. Homodimers and homotetramers. Mainly monomeric but also detected as part of homodimers and homotetramers.

Its subcellular location is the cytoplasm. The protein localises to the cytosol. It localises to the mitochondrion matrix. The enzyme catalyses Fe(III)-heme b-[protein] + nitric oxide + H2O = Fe(II)-heme b-[protein] + nitrite + 2 H(+). Functionally, monomeric globin with a bis-histidyl six-coordinate heme-iron atom through which it can bind dioxygen, carbon monoxide and nitric oxide. Could help transport oxygen and increase its availability to the metabolically active neuronal tissues, though its low quantity in tissues as well as its high affinity for dioxygen, which may limit its oxygen-releasing ability, argue against it. The ferrous/deoxygenated form exhibits a nitrite reductase activity and it could produce nitric oxide which in turn inhibits cellular respiration in response to hypoxia. In its ferrous/deoxygenated state, it may also exhibit GDI (Guanine nucleotide Dissociation Inhibitor) activity toward heterotrimeric G-alpha proteins, thereby regulating signal transduction to facilitate neuroprotective responses in the wake of hypoxia and associated oxidative stress. In Oncorhynchus mykiss (Rainbow trout), this protein is Neuroglobin-1 (ngb1).